The sequence spans 437 residues: Double-stranded RNA-binding protein 3 (437 aa).

The segment at 1–22 (MKKKSAPTPLPPETANTSPAPI) is disordered. DRBM domains follow at residues 35–104 (VFKS…EIVK) and 120–187 (LCKN…AIQG). 2 stretches are compositionally biased toward basic and acidic residues: residues 288 to 310 (AKRV…ENQH) and 320 to 330 (DEARVEQEPSR). Residues 288 to 331 (AKRVEDEPPRDIEMVQPDKENQHSDAALVQPDDEARVEQEPSRD) form a disordered region.

Functionally, binds double-stranded RNA. In Oryza sativa subsp. japonica (Rice), this protein is Double-stranded RNA-binding protein 3 (DRB3).